A 242-amino-acid polypeptide reads, in one-letter code: MRCFKAIVAYDGAYFLGYAKQPNKLGVQDKIESALNALGIKSGVIAAGRTDKGVHANNQALSFHAPKHWNAAKLFHYLAPKLAPHIVLKKLEEKNFHARFDAQKRAYRYLLTKNLKTPFLAPYIACGDYGSLDALNIALKQFIGKHDFSMFKKEGGATTNPNRIIFNALAYKTFIMGHECVVFKIIGDAFLRSSVRLIIQACVQYSLEKITLAEIQAQIHNLKATIRTPIMANGLYLHRVYY.

Asp51 (nucleophile) is an active-site residue. Tyr107 serves as a coordination point for substrate.

This sequence belongs to the tRNA pseudouridine synthase TruA family. As to quaternary structure, homodimer.

The enzyme catalyses uridine(38/39/40) in tRNA = pseudouridine(38/39/40) in tRNA. In terms of biological role, formation of pseudouridine at positions 38, 39 and 40 in the anticodon stem and loop of transfer RNAs. The polypeptide is tRNA pseudouridine synthase A (Helicobacter pylori (strain J99 / ATCC 700824) (Campylobacter pylori J99)).